We begin with the raw amino-acid sequence, 1756 residues long: Transposon Ty1-BR Gag-Pol polyprotein (1756 aa).

3 stretches are compositionally biased toward polar residues: residues 1 to 10 (MESQQLSNYP), 48 to 60 (TKAN…TPAS), and 127 to 152 (QSQF…GNTF). Disordered stretches follow at residues 1 to 93 (MESQ…MMTQ), 126 to 173 (PQSQ…RPPP), and 352 to 421 (GSRN…SKST). Positions 153–165 (TDSSSADSDMTST) are enriched in low complexity. The tract at residues 299 to 401 (NNGIHINNKV…NSKSKTARAH (103 aa)) is RNA-binding. Residues 402–418 (NVSTSNNSPSTDNDSIS) show a composition bias toward low complexity. At Ser416 the chain carries Phosphoserine. Asp461 functions as the For protease activity; shared with dimeric partner in the catalytic mechanism. Residues 583 to 640 (NVHTSESTRKYPYPFIHRMLAHANAQTIRYSLKNNTITYFNESDVDWSSAIDYQCPDC) are integrase-type zinc finger-like. Residues 660 to 835 (NSYEPFQYLH…AGLDISTLLP (176 aa)) form the Integrase catalytic domain. Positions 671 and 736 each coordinate Mg(2+). Disordered stretches follow at residues 956–1088 (SKAV…TEKR) and 1142–1173 (PTEL…SNAY). The segment covering 960–969 (SPTDSTPPST) has biased composition (low complexity). 2 stretches are compositionally biased toward polar residues: residues 1005–1017 (STPQ…STDS) and 1031–1043 (MSQS…SYAS). Positions 1044–1053 (KSKDFRHSDS) are enriched in basic and acidic residues. Positions 1054–1082 (YSDNETNHTNVPISSTGGTNNKTVPQTSE) are enriched in polar residues. Positions 1179-1213 (KKRSLEDNETEIKVSRDTWNTKNMRSLEPPRSKKR) match the Bipartite nuclear localization signal motif. Residues 1339-1477 (NNYYITQLDI…DILGLEIKYQ (139 aa)) enclose the Reverse transcriptase Ty1/copia-type domain. Residues Asp1347, Asp1428, Asp1429, Asp1611, Glu1653, and Asp1686 each contribute to the Mg(2+) site. The RNase H Ty1/copia-type domain maps to 1611–1753 (DASYGNQPYY…IKTFKLLTNK (143 aa)).

In terms of assembly, the capsid protein forms a homotrimer, from which the VLPs are assembled. The protease is a homodimer, whose active site consists of two apposed aspartic acid residues. Post-translationally, initially, virus-like particles (VLPs) are composed of the structural unprocessed proteins Gag and Gag-Pol, and also contain the host initiator methionine tRNA (tRNA(i)-Met) which serves as a primer for minus-strand DNA synthesis, and a dimer of genomic Ty RNA. Processing of the polyproteins occurs within the particle and proceeds by an ordered pathway, called maturation. First, the protease (PR) is released by autocatalytic cleavage of the Gag-Pol polyprotein yielding capsid protein p45 and a Pol-p154 precursor protein. This cleavage is a prerequisite for subsequent processing of Pol-p154 at the remaining sites to release the mature structural and catalytic proteins. Maturation takes place prior to the RT reaction and is required to produce transposition-competent VLPs.

The protein resides in the cytoplasm. It is found in the nucleus. It catalyses the reaction DNA(n) + a 2'-deoxyribonucleoside 5'-triphosphate = DNA(n+1) + diphosphate. It carries out the reaction Endonucleolytic cleavage to 5'-phosphomonoester.. Functionally, capsid protein (CA) is the structural component of the virus-like particle (VLP), forming the shell that encapsulates the retrotransposons dimeric RNA genome. The particles are assembled from trimer-clustered units and there are holes in the capsid shells that allow for the diffusion of macromolecules. CA also has nucleocapsid-like chaperone activity, promoting primer tRNA(i)-Met annealing to the multipartite primer-binding site (PBS), dimerization of Ty1 RNA and initiation of reverse transcription. Its function is as follows. The aspartyl protease (PR) mediates the proteolytic cleavages of the Gag and Gag-Pol polyproteins after assembly of the VLP. In terms of biological role, reverse transcriptase/ribonuclease H (RT) is a multifunctional enzyme that catalyzes the conversion of the retro-elements RNA genome into dsDNA within the VLP. The enzyme displays a DNA polymerase activity that can copy either DNA or RNA templates, and a ribonuclease H (RNase H) activity that cleaves the RNA strand of RNA-DNA heteroduplexes during plus-strand synthesis and hydrolyzes RNA primers. The conversion leads to a linear dsDNA copy of the retrotransposon that includes long terminal repeats (LTRs) at both ends. Integrase (IN) targets the VLP to the nucleus, where a subparticle preintegration complex (PIC) containing at least integrase and the newly synthesized dsDNA copy of the retrotransposon must transit the nuclear membrane. Once in the nucleus, integrase performs the integration of the dsDNA into the host genome. This Saccharomyces cerevisiae (strain ATCC 204508 / S288c) (Baker's yeast) protein is Transposon Ty1-BR Gag-Pol polyprotein (TY1B-BR).